Reading from the N-terminus, the 39-residue chain is Natriuretic peptide PaNP-d (39 aa).

Positions 1-8 (SGSKTAEI) are excised as a propeptide. Residues 1–39 (SGSKTAEIDDGCFGLPLDPIGSTSGMGCRSVPKPIPGGS) are disordered. The cysteines at positions 12 and 28 are disulfide-linked.

Belongs to the natriuretic peptide family. As to expression, expressed by the venom gland.

It is found in the secreted. Snake venom natriuretic peptide that targets both NPR1 and NPR2. Exhibits hypotensive and vasodepressor activities. The sequence is that of Natriuretic peptide PaNP-d from Pseudechis australis (Mulga snake).